Consider the following 403-residue polypeptide: Formin-like protein 21b (403 aa).

The FH2 domain maps to 1–380 (MELLFTATLL…KAAKEAEMEK (380 aa)). Positions 373–403 (AKEAEMEKTKKRVSLTNKKASGVGEEESCLI) are disordered.

Belongs to the formin-like family. Class-II subfamily.

This is Formin-like protein 21b (FH21B) from Arabidopsis thaliana (Mouse-ear cress).